Reading from the N-terminus, the 232-residue chain is tRNA (guanine-N(7)-)-methyltransferase (232 aa).

S-adenosyl-L-methionine-binding residues include Glu-38, Asp-63, Glu-90, and Asp-113. The active site involves Asp-113. Lys-117 and Asp-149 together coordinate substrate.

The protein belongs to the class I-like SAM-binding methyltransferase superfamily. TrmB family.

The catalysed reaction is guanosine(46) in tRNA + S-adenosyl-L-methionine = N(7)-methylguanosine(46) in tRNA + S-adenosyl-L-homocysteine. It participates in tRNA modification; N(7)-methylguanine-tRNA biosynthesis. Catalyzes the formation of N(7)-methylguanine at position 46 (m7G46) in tRNA. In Syntrophotalea carbinolica (strain DSM 2380 / NBRC 103641 / GraBd1) (Pelobacter carbinolicus), this protein is tRNA (guanine-N(7)-)-methyltransferase.